Reading from the N-terminus, the 357-residue chain is Elongation factor Ts (357 aa).

The interval 82-85 is involved in Mg(2+) ion dislocation from EF-Tu; it reads TDFV.

The protein belongs to the EF-Ts family.

It is found in the cytoplasm. In terms of biological role, associates with the EF-Tu.GDP complex and induces the exchange of GDP to GTP. It remains bound to the aminoacyl-tRNA.EF-Tu.GTP complex up to the GTP hydrolysis stage on the ribosome. This is Elongation factor Ts from Campylobacter jejuni subsp. jejuni serotype O:23/36 (strain 81-176).